We begin with the raw amino-acid sequence, 20 residues long: Antifreeze protein (20 aa).

Post-translationally, N-glycosylated and O-glycosylated.

It localises to the secreted. It is found in the extracellular space. Its function is as follows. Antifreeze proteins bind to the surface of ice crystals and inhibit the growth of these crystals, this inhibition causes thermal hysteresis. Causes the shape of ice crystals to change from hexagonal to a bipyramidal shape with rugged facets. Inhibits recrystallization of ice crystals. The chain is Antifreeze protein from Antarctomyces psychrotrophicus.